Reading from the N-terminus, the 313-residue chain is tRNA dimethylallyltransferase 2 (313 aa).

16–23 (GPTASGKT) serves as a coordination point for ATP. 18 to 23 (TASGKT) is a binding site for substrate. 2 interaction with substrate tRNA regions span residues 41-44 (DSRQ) and 161-165 (QRTIR).

Belongs to the IPP transferase family. Monomer. The cofactor is Mg(2+).

It carries out the reaction adenosine(37) in tRNA + dimethylallyl diphosphate = N(6)-dimethylallyladenosine(37) in tRNA + diphosphate. Functionally, catalyzes the transfer of a dimethylallyl group onto the adenine at position 37 in tRNAs that read codons beginning with uridine, leading to the formation of N6-(dimethylallyl)adenosine (i(6)A). The chain is tRNA dimethylallyltransferase 2 from Pelobacter propionicus (strain DSM 2379 / NBRC 103807 / OttBd1).